Reading from the N-terminus, the 319-residue chain is Inactive hydroxysteroid dehydrogenase-like protein 1 (319 aa).

Positions 2–82 (AAVDSFQLLY…CGASEAIAKA (81 aa)) are required for mitochondria translocation. NADP(+) is bound by residues 74-80 (GASEAIA), Lys99, and Asp125.

This sequence belongs to the short-chain dehydrogenases/reductases (SDR) family. 17-beta-HSD 3 subfamily.

It localises to the mitochondrion. In Danio rerio (Zebrafish), this protein is Inactive hydroxysteroid dehydrogenase-like protein 1 (hsdl1).